Here is a 207-residue protein sequence, read N- to C-terminus: Small ribosomal subunit protein uS4A (207 aa).

The region spanning 98 to 161 (RRLDNVVYRM…REHKRIKELA (64 aa)) is the S4 RNA-binding domain.

The protein belongs to the universal ribosomal protein uS4 family. In terms of assembly, part of the 30S ribosomal subunit. Contacts protein S5. The interaction surface between S4 and S5 is involved in control of translational fidelity.

In terms of biological role, one of the primary rRNA binding proteins, it binds directly to 16S rRNA where it nucleates assembly of the body of the 30S subunit. With S5 and S12 plays an important role in translational accuracy. The polypeptide is Small ribosomal subunit protein uS4A (Symbiobacterium thermophilum (strain DSM 24528 / JCM 14929 / IAM 14863 / T)).